The primary structure comprises 84 residues: Defensin-like protein 199 (84 aa).

The signal sequence occupies residues 1-24 (MAITMRTLVAFVFTIFFIISFVHS). Intrachain disulfides connect C40–C80, C47–C72, C56–C78, and C60–C79.

Belongs to the DEFL family.

It localises to the secreted. This is Defensin-like protein 199 from Arabidopsis thaliana (Mouse-ear cress).